An 87-amino-acid chain; its full sequence is UPF0367 protein Syncc9902_0316 (87 aa).

This sequence belongs to the UPF0367 family.

The protein is UPF0367 protein Syncc9902_0316 of Synechococcus sp. (strain CC9902).